Consider the following 343-residue polypeptide: MKFFSLADEAEFKSIIISKNKAVDVIGSKLGGQVVSFSDEWFASAENLIQPTAPIRDPTRFVHSGAWYDGWETRRHNEMEYDWVIIKMGVAAAHIIGGEIDTAFFNGNHAPFVSIEALYDEGEEGNIVEDDSRWVEIVEKFECGPSQRHLFVRGNGLTKERFTHIKLKMYPDGGIARFRLYGRVVPPELKTKDHIIDLAYVCNGAVALKYSDQHFGSVDNLLLPGRGHDMSDGWETKRSRQPGHTDWAVIQLGRESSFIEKIIVDTAHFRGNFPQFITVEGCLKESESSENTGEGTWVELVGKSKTGPDKEHVYEIRKSIRVSHVKLTIIPDGGVKRIRVWGY.

The protein belongs to the allantoicase family.

It carries out the reaction allantoate + H2O = (S)-ureidoglycolate + urea. The protein operates within nitrogen metabolism; (S)-allantoin degradation; (S)-ureidoglycolate from allantoate (aminidohydrolase route): step 1/1. In terms of biological role, utilization of purines as secondary nitrogen sources, when primary sources are limiting. This chain is Allantoicase (DAL2), found in Saccharomyces cerevisiae (strain ATCC 204508 / S288c) (Baker's yeast).